The following is a 49-amino-acid chain: Large ribosomal subunit protein bL33 (49 aa).

The protein belongs to the bacterial ribosomal protein bL33 family.

The polypeptide is Large ribosomal subunit protein bL33 (Carboxydothermus hydrogenoformans (strain ATCC BAA-161 / DSM 6008 / Z-2901)).